We begin with the raw amino-acid sequence, 274 residues long: Bis(5'-nucleosyl)-tetraphosphatase, symmetrical (274 aa).

This sequence belongs to the Ap4A hydrolase family.

It catalyses the reaction P(1),P(4)-bis(5'-adenosyl) tetraphosphate + H2O = 2 ADP + 2 H(+). Functionally, hydrolyzes diadenosine 5',5'''-P1,P4-tetraphosphate to yield ADP. This Janthinobacterium sp. (strain Marseille) (Minibacterium massiliensis) protein is Bis(5'-nucleosyl)-tetraphosphatase, symmetrical.